The primary structure comprises 83 residues: Apolipoprotein C-I, basic form (83 aa).

The first 26 residues, methionine 1–glycine 26, serve as a signal peptide directing secretion.

The protein belongs to the apolipoprotein C1 family.

Its subcellular location is the secreted. Functionally, inhibitor of lipoprotein binding to the low density lipoprotein (LDL) receptor, LDL receptor-related protein, and very low density lipoprotein (VLDL) receptor. Associates with high density lipoproteins (HDL) and the triacylglycerol-rich lipoproteins in the plasma and makes up about 10% of the protein of the VLDL and 2% of that of HDL. Appears to interfere directly with fatty acid uptake and is also the major plasma inhibitor of cholesteryl ester transfer protein (CETP). Binds free fatty acids and reduces their intracellular esterification. Modulates the interaction of APOE with beta-migrating VLDL and inhibits binding of beta-VLDL to the LDL receptor-related protein. In Papio anubis (Olive baboon), this protein is Apolipoprotein C-I, basic form (APOC1).